An 881-amino-acid chain; its full sequence is Valine--tRNA ligase (881 aa).

The 'HIGH' region signature appears at 48 to 58 (PNITGKLHLGH). A 'KMSKS' region motif is present at residues 527–531 (KMSKS). ATP is bound at residue Lys530. 2 coiled-coil regions span residues 721 to 747 (KNETSENAMNQIIEAIKSIRNVRAEMN) and 811 to 881 (LLDL…AALK).

It belongs to the class-I aminoacyl-tRNA synthetase family. ValS type 1 subfamily. In terms of assembly, monomer.

Its subcellular location is the cytoplasm. The catalysed reaction is tRNA(Val) + L-valine + ATP = L-valyl-tRNA(Val) + AMP + diphosphate. Catalyzes the attachment of valine to tRNA(Val). As ValRS can inadvertently accommodate and process structurally similar amino acids such as threonine, to avoid such errors, it has a 'posttransfer' editing activity that hydrolyzes mischarged Thr-tRNA(Val) in a tRNA-dependent manner. This Clostridium acetobutylicum (strain ATCC 824 / DSM 792 / JCM 1419 / IAM 19013 / LMG 5710 / NBRC 13948 / NRRL B-527 / VKM B-1787 / 2291 / W) protein is Valine--tRNA ligase.